Reading from the N-terminus, the 469-residue chain is Citrate synthase, mitochondrial (469 aa).

Residues 1–28 constitute a mitochondrion transit peptide; the sequence is MAFFRTVTKLRSRLGQPPSLRDSVRCLQ. Catalysis depends on residues His-304, His-350, and Asp-405.

It belongs to the citrate synthase family. As to quaternary structure, homodimer.

It localises to the mitochondrion matrix. The catalysed reaction is oxaloacetate + acetyl-CoA + H2O = citrate + CoA + H(+). It participates in carbohydrate metabolism; tricarboxylic acid cycle; isocitrate from oxaloacetate: step 1/2. This Fragaria ananassa (Strawberry) protein is Citrate synthase, mitochondrial (MCSI).